The primary structure comprises 67 residues: MKPSEMRNLQATDFAKEIDARKKELMELRFQAAAGQLAQPHRVRQLRREVAQLNTVKAELARKGEQQ.

It belongs to the universal ribosomal protein uL29 family. In terms of assembly, part of the 50S ribosomal subunit. Contacts protein L23 and trigger factor when it is complexed with the ribosome.

Functionally, binds the 23S rRNA. One of the proteins that surrounds the polypeptide exit tunnel on the outside of the subunit. This is Large ribosomal subunit protein uL29 (rpmC) from Deinococcus radiodurans (strain ATCC 13939 / DSM 20539 / JCM 16871 / CCUG 27074 / LMG 4051 / NBRC 15346 / NCIMB 9279 / VKM B-1422 / R1).